We begin with the raw amino-acid sequence, 53 residues long: Conotoxin Cal22e (53 aa).

Positions 1 to 5 (GRPSA) are excised as a propeptide.

Post-translationally, contains 4 disulfide bonds. In terms of tissue distribution, expressed by the venom duct.

It is found in the secreted. Probable neurotoxin with unknown target. Possibly targets ion channels. The polypeptide is Conotoxin Cal22e (Californiconus californicus (California cone)).